Consider the following 1428-residue polypeptide: DNA polymerase III PolC-type (1428 aa).

In terms of domain architecture, Exonuclease spans 414–570; it reads FVVFDVETTG…YDAEATGYLL (157 aa).

It belongs to the DNA polymerase type-C family. PolC subfamily.

The protein resides in the cytoplasm. The catalysed reaction is DNA(n) + a 2'-deoxyribonucleoside 5'-triphosphate = DNA(n+1) + diphosphate. In terms of biological role, required for replicative DNA synthesis. This DNA polymerase also exhibits 3' to 5' exonuclease activity. The sequence is that of DNA polymerase III PolC-type from Oceanobacillus iheyensis (strain DSM 14371 / CIP 107618 / JCM 11309 / KCTC 3954 / HTE831).